We begin with the raw amino-acid sequence, 348 residues long: Anthranilate phosphoribosyltransferase (348 aa).

Residues Gly-87, 90-91 (GD), Thr-95, 97-100 (NIST), 115-123 (KHGNRSASG), and Ser-127 each bind 5-phospho-alpha-D-ribose 1-diphosphate. Gly-87 is a binding site for anthranilate. Ser-99 serves as a coordination point for Mg(2+). Residue Asn-118 participates in anthranilate binding. Arg-173 serves as a coordination point for anthranilate. Positions 232 and 233 each coordinate Mg(2+).

The protein belongs to the anthranilate phosphoribosyltransferase family. In terms of assembly, homodimer. Requires Mg(2+) as cofactor.

It catalyses the reaction N-(5-phospho-beta-D-ribosyl)anthranilate + diphosphate = 5-phospho-alpha-D-ribose 1-diphosphate + anthranilate. It functions in the pathway amino-acid biosynthesis; L-tryptophan biosynthesis; L-tryptophan from chorismate: step 2/5. Its function is as follows. Catalyzes the transfer of the phosphoribosyl group of 5-phosphorylribose-1-pyrophosphate (PRPP) to anthranilate to yield N-(5'-phosphoribosyl)-anthranilate (PRA). The polypeptide is Anthranilate phosphoribosyltransferase (Synechococcus sp. (strain WH7803)).